We begin with the raw amino-acid sequence, 525 residues long: Sucrose transport protein (525 aa).

Topologically, residues 1-37 (MAGRNIKNGENNKIAGSSLHLEKNPTTPPEAEATLKK) are cytoplasmic. Transmembrane regions (helical) follow at residues 38–58 (LGLVASVAAGVQFGWALQLSL), 72–92 (WAAYIWLCGPISGMIVQPLVG), 107–127 (PFIAAGAALVAVAVGLIGFAA), 145–165 (AIAVFVVGFWILDVANNTLQG), 184–204 (YANAFFSFFMALGNIGGYAAG), 230–250 (SCFFISITLLIVLTILALSVV), 295–315 (MLILLLVTALNWIAWFPFLLF), 338–358 (GVHAGALGLMINSVVLGVMSL), 373–393 (LWGIVNIILAVCLAMTVLVTK), 422–442 (LAIFAVLGIPLAITFSIPFAL), 455–475 (GLSLGVLNLAIVVPQMFVSVT), and 488–508 (LPAFVVGAVAATASAVLSFTL). At 509-525 (LPSPPPEAKIGGSMGGH) the chain is on the cytoplasmic side.

The protein belongs to the glycoside-pentoside-hexuronide (GPH) cation symporter transporter (TC 2.A.2.4) family.

The protein resides in the membrane. It participates in glycan biosynthesis; sucrose metabolism. Functionally, responsible for the transport of sucrose into the cell, with the concomitant uptake of protons (symport system). Can also transport maltose at a lesser rate. The polypeptide is Sucrose transport protein (Spinacia oleracea (Spinach)).